We begin with the raw amino-acid sequence, 134 residues long: uncharacterized protein (134 aa).

Positions 10–70 (KETRQRIIDA…AVLASRQHPL (61 aa)) constitute an HTH tetR-type domain. The segment at residues 33 to 52 (TLDQIARKAGVTRGAVYWHF) is a DNA-binding region (H-T-H motif).

In terms of biological role, unknown, does not seem to be involved in regulation of the ttgGHI or ttgVW operons. This is an uncharacterized protein from Pseudomonas putida (strain DOT-T1E).